Consider the following 207-residue polypeptide: Na(+)-translocating NADH-quinone reductase subunit D (207 aa).

Transmembrane regions (helical) follow at residues 20–40 (IALQILGICSALAVTTQLQTA), 41–61 (FVMAIAVSLVTAFSSMFISMI), 69–89 (IRIIVQMAIIASLVILVDQIL), 102–122 (VFVGLIITNCIVMGRAEAFAM), 130–150 (FVDGIGNGLGYGAMLVIVAFL), and 177–197 (NGLFLLAPSAFFIIGFVIWAI).

The protein belongs to the NqrDE/RnfAE family. In terms of assembly, composed of six subunits; NqrA, NqrB, NqrC, NqrD, NqrE and NqrF.

The protein resides in the cell inner membrane. The catalysed reaction is a ubiquinone + n Na(+)(in) + NADH + H(+) = a ubiquinol + n Na(+)(out) + NAD(+). Its function is as follows. NQR complex catalyzes the reduction of ubiquinone-1 to ubiquinol by two successive reactions, coupled with the transport of Na(+) ions from the cytoplasm to the periplasm. NqrA to NqrE are probably involved in the second step, the conversion of ubisemiquinone to ubiquinol. This is Na(+)-translocating NADH-quinone reductase subunit D from Haemophilus ducreyi (strain 35000HP / ATCC 700724).